Reading from the N-terminus, the 352-residue chain is Inner membrane protein YeeA (352 aa).

Residues 1–25 (MRADKSLSPFEIRVYRHYRIVHGTR) lie on the Cytoplasmic side of the membrane. The next 2 helical transmembrane spans lie at 26–46 (VALA…PEST) and 47–67 (WPLV…NVVP). Arg-68 is a topological domain (cytoplasmic). The chain crosses the membrane as a helical span at residues 69–89 (AFERIGGTVLGSILGLIALQL). Glu-90 is a topological domain (periplasmic). The helical transmembrane segment at 91–111 (LISLPLMLVWCAAAMFLCGWL) threads the bilayer. The Cytoplasmic portion of the chain corresponds to 112-117 (ALGKKP). Residues 118–138 (YQGLLIGVTLAIVVGSPTGEI) form a helical membrane-spanning segment. Over 139–147 (DTALWRSGD) the chain is Periplasmic. Residues 148 to 168 (VILGSLLAMLFTGIWPQRAFI) form a helical membrane-spanning segment. Topologically, residues 169 to 352 (HWRIQLAKSL…SNLICRALRK (184 aa)) are cytoplasmic.

It is found in the cell inner membrane. The chain is Inner membrane protein YeeA (yeeA) from Escherichia coli (strain K12).